A 328-amino-acid polypeptide reads, in one-letter code: Telomere-binding protein cav (328 aa).

The interval 107-320 is required for binding to Su(var)205; that stretch reads RRKMVQPYPE…NISLQNSGSE (214 aa). A disordered region spans residues 139–228; sequence DRWQKQKSQN…EFQTEHTDCP (90 aa). Composition is skewed to polar residues over residues 144–167 and 180–189; these read QKSQ…QQDS and ANTNRYSVSQ. 2 short sequence motifs (su(var)205-binding Pro-containing repeat) span residues 228–232 and 281–287; these read PETQM and PETETNE. A compositionally biased stretch (polar residues) spans 295–319; sequence INSESMSIGPSIDSEGNISLQNSGS. The disordered stretch occupies residues 295–328; the sequence is INSESMSIGPSIDSEGNISLQNSGSEPIDVDSMA.

As to quaternary structure, interacts (via C-terminus) with Su(var)205 dimer (via hinge and chromoshadow domain) and with moi to form the terminin, telomere-capping, complex. Interacts with HP6, which is also part of the terminin complex.

The protein resides in the nucleus. It is found in the chromosome. It localises to the telomere. Binds to chromosome ends in a sequence-dependent manner and is required for telomere capping. The chain is Telomere-binding protein cav from Drosophila erecta (Fruit fly).